A 546-amino-acid chain; its full sequence is MTKYIFVTGGVVSSVGKGIGVASIGRLLKSRGLSVSVMKLDPYLNVDPGTMSPYQHGEVFVTADGAETDLDLGHYERFIDVNLSRLSNVTTGQIYSAVIAKERRGDYLGGTIQVIPHITNEIKSRIGSLARSSQADVVIVEIGGTVGDIESLPFLEAIRQMRKDVGRDNILYIHVTLLPHISTGELKTKPTQHSVMALRNVGISADIILCRADRPIDDEIREKIAFFADVDVRAVIPVPTVDSIYEVPLVLEDMGLGDYLVERLGLPATPPDLEEWRALVARIRQEKRRVPIALVGKYVELHDAYISVVEALHHAGLEQSIDIDIRWIAAEEVEREGPARLLSGVYGILVPGGFGERGIEGKIAAADYARIHGIPYLGLCLGMQCATIAFARHVLGTHDVNSTEFNPQTAHPVIDLMPDQRDITEKGGTMRLGLYPCDLVPGTRAHAAYGCDRVEERHRHRFEFNNRYRSVLEAAGLVISGISPDKRLVEIIELRDHPWYVASQFHPEFQSRPGKPHPLFRGFVAAAAQTLLAGEARQLPLVESTS.

The segment at 1 to 266 is amidoligase domain; it reads MTKYIFVTGG…GDYLVERLGL (266 aa). S13 is a CTP binding site. S13 contacts UTP. 14-19 serves as a coordination point for ATP; the sequence is SVGKGI. Residue Y54 participates in L-glutamine binding. D71 is an ATP binding site. Mg(2+) contacts are provided by D71 and E141. Residues 148–150, 187–192, and K223 each bind CTP; these read DIE and KTKPTQ. UTP-binding positions include 187 to 192 and K223; that span reads KTKPTQ. Residues 291–533 form the Glutamine amidotransferase type-1 domain; the sequence is PIALVGKYVE…VAAAAQTLLA (243 aa). G353 is a binding site for L-glutamine. C380 functions as the Nucleophile; for glutamine hydrolysis in the catalytic mechanism. L-glutamine is bound by residues 381–384, E404, and R461; that span reads LGMQ. Active-site residues include H506 and E508.

It belongs to the CTP synthase family. Homotetramer.

It catalyses the reaction UTP + L-glutamine + ATP + H2O = CTP + L-glutamate + ADP + phosphate + 2 H(+). The catalysed reaction is L-glutamine + H2O = L-glutamate + NH4(+). It carries out the reaction UTP + NH4(+) + ATP = CTP + ADP + phosphate + 2 H(+). The protein operates within pyrimidine metabolism; CTP biosynthesis via de novo pathway; CTP from UDP: step 2/2. Its activity is regulated as follows. Allosterically activated by GTP, when glutamine is the substrate; GTP has no effect on the reaction when ammonia is the substrate. The allosteric effector GTP functions by stabilizing the protein conformation that binds the tetrahedral intermediate(s) formed during glutamine hydrolysis. Inhibited by the product CTP, via allosteric rather than competitive inhibition. In terms of biological role, catalyzes the ATP-dependent amination of UTP to CTP with either L-glutamine or ammonia as the source of nitrogen. Regulates intracellular CTP levels through interactions with the four ribonucleotide triphosphates. This chain is CTP synthase, found in Chloroflexus aurantiacus (strain ATCC 29366 / DSM 635 / J-10-fl).